The chain runs to 549 residues: uncharacterized protein (549 aa).

This is an uncharacterized protein from Acanthamoeba polyphaga (Amoeba).